We begin with the raw amino-acid sequence, 222 residues long: MLKSRVILAMDKPLSYQVLKEMENELYGIKVGLPLVLDLGVDKTRELLIGLDVEEIIVDFKLADIGYIMKSIVERLSFANSFIAHSFIGVKGSLDELKRYLDANSKNLYLVAVMSHEGWSTLFADYIKNVIREISPKGIVVGGTKLDHITQYRRDFEKMTIVSPGMGSQGGSYGDAVCAGADYEIIGRSIYNAGNPLTALRTINKIIEDKVMKCKGAIFRKK.

Substrate is bound by residues D11, K30, 59-68 (DFKLADIGYI), S115, 164-174 (PGMGSQGGSYG), G187, and R188. The active-site Proton donor is the K61.

Belongs to the OMP decarboxylase family. Type 1 subfamily. In terms of assembly, homodimer.

The enzyme catalyses orotidine 5'-phosphate + H(+) = UMP + CO2. The protein operates within pyrimidine metabolism; UMP biosynthesis via de novo pathway; UMP from orotate: step 2/2. In terms of biological role, catalyzes the decarboxylation of orotidine 5'-monophosphate (OMP) to uridine 5'-monophosphate (UMP). This is Orotidine 5'-phosphate decarboxylase from Saccharolobus solfataricus (strain ATCC 35092 / DSM 1617 / JCM 11322 / P2) (Sulfolobus solfataricus).